Reading from the N-terminus, the 1877-residue chain is Proprotein convertase subtilisin/kexin type 5 (1877 aa).

The N-terminal stretch at 1–34 (MDWDWGNRCSRPGRRDLLCVLALLAGCLLPVCRT) is a signal peptide. Residues 35–116 (RVYTNHWAVK…QQVVKKRTKR (82 aa)) constitute a propeptide that is removed on maturation. Topologically, residues 117–1768 (DYDLSHAQST…EAEFYEHTKT (1652 aa)) are extracellular. The Peptidase S8 domain occupies 136–455 (MWYMHCSDNT…FGLMDAEAMV (320 aa)). Active-site charge relay system residues include aspartate 173 and histidine 214. N-linked (GlcNAc...) asparagine glycosylation is found at asparagine 227 and asparagine 383. The Charge relay system role is filled by serine 388. Positions 463–603 (TVPQQHVCVE…SLVLYGTSVQ (141 aa)) constitute a P/Homo B domain. A Cell attachment site motif is present at residues 521 to 523 (RGD). FU repeat units lie at residues 632–682 (EDYA…GHYH), 685–732 (KKRC…GSYE), 736–779 (KNVC…GQFF), 781–826 (GHDC…SYYL), 834–881 (YKSC…GEYI), 884–929 (QGHC…WKFE), 931–981 (KKQC…GHYP), 984–1030 (GHAC…GEFQ), 1034–1079 (YEEC…KTFG), 1081–1123 (KWEC…GFHG), 1127–1168 (LGEC…STWP), 1206–1248 (TSQN…GTWP), 1252–1299 (SGSC…GFYA), 1301–1345 (DGVC…KHVA), 1347–1390 (EGVC…SFYP), 1392–1438 (MRQC…GTYK), 1442–1487 (NDEC…VEYW), 1491–1536 (SHRC…GYHT), 1540–1585 (SQQC…GYYG), 1589–1636 (SGRC…HYYA), 1640–1685 (AQTC…GEYR), and 1691–1738 (NFNC…SHSR). The segment at 638-1753 (CDPECSEVGC…CDCQSSTDEC (1116 aa)) is CRM (Cys-rich motif). N-linked (GlcNAc...) asparagine glycosylation occurs at asparagine 667. N-linked (GlcNAc...) asparagine glycans are attached at residues asparagine 754, asparagine 804, and asparagine 854. N-linked (GlcNAc...) asparagine glycosylation is found at asparagine 951 and asparagine 1016. N-linked (GlcNAc...) asparagine glycosylation is present at asparagine 1220. A glycan (N-linked (GlcNAc...) asparagine) is linked at asparagine 1317. Asparagine 1523 carries N-linked (GlcNAc...) asparagine glycosylation. 2 N-linked (GlcNAc...) asparagine glycosylation sites follow: asparagine 1711 and asparagine 1733. Residues 1769 to 1789 (ALLVTSGAMLLLLLGAAAVVW) form a helical membrane-spanning segment. Over 1790–1877 (RKSRSRPVAK…EYDDESYSYQ (88 aa)) the chain is Cytoplasmic. AC stretches follow at residues 1825-1844 (VIEY…IVYM) and 1856-1877 (YGLL…YSYQ).

Belongs to the peptidase S8 family. In terms of tissue distribution, PC5A is expressed in most tissues but is most abundant in the intestine and adrenals. PC5B is expressed in the intestine, adrenals and lung but not in the brain.

It is found in the secreted. The protein localises to the endomembrane system. Serine endoprotease that processes various proproteins by cleavage at paired basic amino acids, recognizing the RXXX[KR]R consensus motif. Likely functions in the constitutive and regulated secretory pathways. Plays an essential role in pregnancy establishment by proteolytic activation of a number of important factors such as BMP2, CALD1 and alpha-integrins. May be responsible for the maturation of gastrointestinal peptides. May be involved in the cellular proliferation of adrenal cortex via the activation of growth factors. The sequence is that of Proprotein convertase subtilisin/kexin type 5 (Pcsk5) from Mus musculus (Mouse).